The following is a 187-amino-acid chain: uncharacterized protein (187 aa).

In terms of domain architecture, Nudix hydrolase spans 26–157; it reads NRHAAVLLPI…YLDVSRRGQQ (132 aa). Residues 64 to 86 carry the Nudix box motif; it reads GVADPKDKSIIATALREAEEEVN. Mg(2+)-binding residues include glutamate 80 and glutamate 84.

This sequence belongs to the Nudix hydrolase family. PCD1 subfamily. It depends on Mn(2+) as a cofactor. Requires Mg(2+) as cofactor.

In terms of biological role, probably mediates the hydrolysis of some nucleoside diphosphate derivatives. This is an uncharacterized protein from Photorhabdus laumondii subsp. laumondii (strain DSM 15139 / CIP 105565 / TT01) (Photorhabdus luminescens subsp. laumondii).